The sequence spans 99 residues: DNA-directed RNA polymerase subunit omega (99 aa).

The protein belongs to the RNA polymerase subunit omega family. In terms of assembly, the RNAP catalytic core consists of 2 alpha, 1 beta, 1 beta' and 1 omega subunit. When a sigma factor is associated with the core the holoenzyme is formed, which can initiate transcription.

It catalyses the reaction RNA(n) + a ribonucleoside 5'-triphosphate = RNA(n+1) + diphosphate. Its function is as follows. Promotes RNA polymerase assembly. Latches the N- and C-terminal regions of the beta' subunit thereby facilitating its interaction with the beta and alpha subunits. The polypeptide is DNA-directed RNA polymerase subunit omega (Xanthomonas axonopodis pv. citri (strain 306)).